Reading from the N-terminus, the 345-residue chain is Probable translocation protein y4yO (345 aa).

Positions 1–22 (MSDTSEEKSHGATPKKLSDARK) are enriched in basic and acidic residues. Residues 1–25 (MSDTSEEKSHGATPKKLSDARKRGQ) are disordered. The next 3 helical transmembrane spans lie at 87–107 (LATV…AALL), 151–171 (VLVL…TMVY), and 189–209 (QLIG…LLLQ).

It belongs to the type III secretion exporter family.

The protein resides in the cell membrane. Could be involved in the secretion of an unknown factor. The sequence is that of Probable translocation protein y4yO from Sinorhizobium fredii (strain NBRC 101917 / NGR234).